A 354-amino-acid polypeptide reads, in one-letter code: Uroporphyrinogen decarboxylase (354 aa).

Substrate contacts are provided by residues Arg-27 to Arg-31, Phe-46, Asp-77, Tyr-154, Thr-209, and His-327.

The protein belongs to the uroporphyrinogen decarboxylase family. As to quaternary structure, homodimer.

It localises to the cytoplasm. It catalyses the reaction uroporphyrinogen III + 4 H(+) = coproporphyrinogen III + 4 CO2. Its pathway is porphyrin-containing compound metabolism; protoporphyrin-IX biosynthesis; coproporphyrinogen-III from 5-aminolevulinate: step 4/4. Functionally, catalyzes the decarboxylation of four acetate groups of uroporphyrinogen-III to yield coproporphyrinogen-III. This chain is Uroporphyrinogen decarboxylase, found in Salmonella typhi.